A 310-amino-acid chain; its full sequence is Putative S-adenosyl-L-methionine-dependent methyltransferase MMAR_0356 (310 aa).

Residues aspartate 137 and 166 to 167 (DL) contribute to the S-adenosyl-L-methionine site.

It belongs to the UPF0677 family.

Its function is as follows. Exhibits S-adenosyl-L-methionine-dependent methyltransferase activity. This is Putative S-adenosyl-L-methionine-dependent methyltransferase MMAR_0356 from Mycobacterium marinum (strain ATCC BAA-535 / M).